Reading from the N-terminus, the 180-residue chain is NAD(P)H-quinone oxidoreductase subunit I, chloroplastic (180 aa).

4Fe-4S ferredoxin-type domains follow at residues 55 to 84 (GRIH…VDWR) and 95 to 124 (LNYS…MTEE). The [4Fe-4S] cluster site is built by cysteine 64, cysteine 67, cysteine 70, cysteine 74, cysteine 104, cysteine 107, cysteine 110, and cysteine 114.

This sequence belongs to the complex I 23 kDa subunit family. In terms of assembly, NDH is composed of at least 16 different subunits, 5 of which are encoded in the nucleus. Requires [4Fe-4S] cluster as cofactor.

The protein localises to the plastid. Its subcellular location is the chloroplast thylakoid membrane. It catalyses the reaction a plastoquinone + NADH + (n+1) H(+)(in) = a plastoquinol + NAD(+) + n H(+)(out). It carries out the reaction a plastoquinone + NADPH + (n+1) H(+)(in) = a plastoquinol + NADP(+) + n H(+)(out). In terms of biological role, NDH shuttles electrons from NAD(P)H:plastoquinone, via FMN and iron-sulfur (Fe-S) centers, to quinones in the photosynthetic chain and possibly in a chloroplast respiratory chain. The immediate electron acceptor for the enzyme in this species is believed to be plastoquinone. Couples the redox reaction to proton translocation, and thus conserves the redox energy in a proton gradient. The polypeptide is NAD(P)H-quinone oxidoreductase subunit I, chloroplastic (Liriodendron tulipifera (Tuliptree)).